An 868-amino-acid polypeptide reads, in one-letter code: Leucine--tRNA ligase (868 aa).

The short motif at 42-52 is the 'HIGH' region element; sequence PYPSGKLHMGH. The 'KMSKS' region motif lies at 627 to 631; the sequence is KMSKS. Lysine 630 contributes to the ATP binding site.

Belongs to the class-I aminoacyl-tRNA synthetase family.

It is found in the cytoplasm. The enzyme catalyses tRNA(Leu) + L-leucine + ATP = L-leucyl-tRNA(Leu) + AMP + diphosphate. The polypeptide is Leucine--tRNA ligase (Pseudomonas putida (strain ATCC 47054 / DSM 6125 / CFBP 8728 / NCIMB 11950 / KT2440)).